Here is a 394-residue protein sequence, read N- to C-terminus: Elongation factor Tu (394 aa).

A tr-type G domain is found at 10-204 (KPHINVGTIG…SLDKYIPIPV (195 aa)). A G1 region spans residues 19–26 (GHVDHGKT). Position 19-26 (19-26 (GHVDHGKT)) interacts with GTP. Threonine 26 is a binding site for Mg(2+). A G2 region spans residues 60–64 (GITIN). The tract at residues 81–84 (DCPG) is G3. Residues 81–85 (DCPGH) and 136–139 (NKCD) each bind GTP. Residues 136 to 139 (NKCD) are G4. Positions 174 to 176 (SAL) are G5.

This sequence belongs to the TRAFAC class translation factor GTPase superfamily. Classic translation factor GTPase family. EF-Tu/EF-1A subfamily. Monomer.

The protein resides in the cytoplasm. It carries out the reaction GTP + H2O = GDP + phosphate + H(+). In terms of biological role, GTP hydrolase that promotes the GTP-dependent binding of aminoacyl-tRNA to the A-site of ribosomes during protein biosynthesis. The chain is Elongation factor Tu from Buchnera aphidicola subsp. Cinara cedri (strain Cc).